A 117-amino-acid polypeptide reads, in one-letter code: UPF0342 protein LGAS_1451 (117 aa).

This sequence belongs to the UPF0342 family.

The chain is UPF0342 protein LGAS_1451 from Lactobacillus gasseri (strain ATCC 33323 / DSM 20243 / BCRC 14619 / CIP 102991 / JCM 1131 / KCTC 3163 / NCIMB 11718 / NCTC 13722 / AM63).